A 102-amino-acid chain; its full sequence is VDAPADMVIKAPAGAKVTKAPVAFSHKGHASMDCKTCHHKWDGAGAIQPCQASGCHANTESKKGDDSFYMAFHERKSEKSCVGCHKSMKKGPTKCTECHPKN.

Heme c is bound by residues His26, His29, Cys34, Cys37, His38, His39, Cys50, Cys55, His56, His73, Cys81, Cys84, His85, Cys95, Cys98, and His99.

The cofactor is heme.

It is found in the periplasm. Participates in sulfate respiration coupled with phosphorylation by transferring electrons from the enzyme dehydrogenase to ferredoxin. The sequence is that of Cytochrome c3 from Desulfovibrio desulfuricans.